The chain runs to 1159 residues: WASH complex subunit 5 (1159 aa).

Residue serine 917 is modified to Phosphoserine.

The protein belongs to the strumpellin family. As to quaternary structure, component of the WASH core complex also described as WASH regulatory complex (SHRC) composed of WASH (WASHC1, WASH2P or WASH3P), WASHC2 (WASHC2A or WASHC2C), WASHC3, WASHC4 and WASHC5. The WASH core complex associates via WASHC2 with the F-actin-capping protein dimer (formed by CAPZA1, CAPZA2 or CAPZA3 and CAPZB) in a transient or substoichiometric manner which was initially described as WASH complex. Interacts with VCP, PI4K2A. In terms of tissue distribution, expressed ubiquitously.

It is found in the cytoplasm. The protein localises to the cytosol. The protein resides in the endoplasmic reticulum. Its subcellular location is the early endosome. Its function is as follows. Acts as a component of the WASH core complex that functions as a nucleation-promoting factor (NPF) at the surface of endosomes, where it recruits and activates the Arp2/3 complex to induce actin polymerization, playing a key role in the fission of tubules that serve as transport intermediates during endosome sorting. May be involved in axonal outgrowth. Involved in cellular localization of ADRB2. Involved in cellular trafficking of BLOC-1 complex cargos such as ATP7A and VAMP7. This chain is WASH complex subunit 5, found in Homo sapiens (Human).